The primary structure comprises 528 residues: Major facilitator-type transporter psiT2 (528 aa).

Residues 1–20 (MSPERSASLEPDEHSSLLSD) form a disordered region. The next 5 membrane-spanning stretches (helical) occupy residues 87 to 107 (FYSG…IFML), 125 to 145 (LGVA…MMLV), 148 to 168 (VCAG…SELT), 174 to 194 (ALVV…GPLI), and 220 to 240 (FLPS…GYFF). Low complexity predominate over residues 260 to 270 (STSSISSRTST). A disordered region spans residues 260–299 (STSSISSRTSTLYGATDDHNRDASESTALSPEEAEDEIDS). Transmembrane regions (helical) follow at residues 322–342 (FLMF…FTAV), 357–377 (AFSV…PWVL), 388–408 (FCMF…PLAQ), 424–444 (GLLY…VMAF), 460–479 (LATA…ALCP), and 493–513 (NILG…AGVW).

Belongs to the major facilitator superfamily. TCR/Tet family.

It is found in the membrane. Major facilitator-type transporter; part of the gene cluster that mediates the biosynthesis of psilocybin, a psychotropic tryptamine-derived natural product. This Psilocybe cyanescens protein is Major facilitator-type transporter psiT2.